The following is a 217-amino-acid chain: Ras-related protein Rab-39A (217 aa).

The GTP site is built by Ser-17, Gly-20, Lys-21, Ser-22, Cys-23, and Thr-44. Position 22 (Ser-22) interacts with Mg(2+). The interval 39-47 is switch-I; that stretch reads PACDPTVGV. Residues Thr-44 and Asp-68 each coordinate Mg(2+). GTP-binding residues include Gly-71, His-127, Lys-128, Asp-130, Ala-158, and Lys-159. The switch-II stretch occupies residues 71–87; the sequence is GQERFRSITRSYYRNSV. 2 S-geranylgeranyl cysteine lipidation sites follow: Cys-215 and Cys-217. Cysteine methyl ester is present on Cys-217.

Belongs to the small GTPase superfamily. Rab family. In terms of assembly, interacts (GDP-bound) with C9orf72; C9orf72 acts as a GEF for RAB39A. Interacts (GTP-bound) with HOPS complex components VPS39 and VPS41, and STX17; interaction between HOPS components and RAB39A contributes to obtaining a functional HOPS complex that promotes membrane fusion driven by STX17-SNAP29-VAMP8. Interacts with BECN1. Probably associates with the PI3K (PI3KC3/PI3K-III/class III phosphatidylinositol 3-kinase) complex. Interacts with UACA. Interacts with isoform a of RASSF1. Does not interact with isoform c of RASSF1. The cofactor is Mg(2+). In terms of processing, prenylated. Prenylation is required for association with cellular membranes.

Its subcellular location is the cell membrane. The protein localises to the cytoplasmic vesicle. It localises to the phagosome membrane. The protein resides in the lysosome membrane. It is found in the autolysosome membrane. The catalysed reaction is GTP + H2O = GDP + phosphate + H(+). With respect to regulation, regulated by guanine nucleotide exchange factors (GEFs) including c9Orf72, which promote the exchange of bound GDP for free GTP. Regulated by GTPase activating proteins (GAPs) which increase the GTP hydrolysis activity. Inhibited by GDP dissociation inhibitors (GDIs). In terms of biological role, the small GTPases Rab are key regulators of intracellular membrane trafficking, from the formation of transport vesicles to their fusion with membranes. Rabs cycle between an inactive GDP-bound form and an active GTP-bound form that is able to recruit to membranes different sets of downstream effectors directly responsible for vesicle formation, movement, tethering and fusion. RAB39A regulates autophagosome-lysosome fusion via recruitment of the HOPS endosomal tethering complex onto lysosomes; this process involves lysosomal RAB39A and autophagosomal RAB2A recruitment of HOPS subcomplexes VPS41-VPS16-VPS18-VPS33A and VPS39-VPS11, respectively, which assemble into a functional complex to mediate membrane tethering and SNAREs-driven membrane fusion. Also negatively regulates lipopolysaccharide (LPS)-induced autophagosome formation in macrophages, possibly by implicating PI3K. Promotes the delivery of MHC-I molecules from the ER to phagosomes and the generation of peptide-loaded MHC-I complexes in phagosomes, thus enhancing antigen cross-presentation by dendritic cells. Plays a role in the maturation and acidification of phagosomes that engulf pathogens, such as S.aureus and M.tuberculosis. Plays a role in the fusion of phagosomes with lysosomes. May be involved in multiple neurite formation. The chain is Ras-related protein Rab-39A from Homo sapiens (Human).